A 248-amino-acid chain; its full sequence is 3-deoxy-manno-octulosonate cytidylyltransferase (248 aa).

The protein belongs to the KdsB family.

It localises to the cytoplasm. It catalyses the reaction 3-deoxy-alpha-D-manno-oct-2-ulosonate + CTP = CMP-3-deoxy-beta-D-manno-octulosonate + diphosphate. The protein operates within nucleotide-sugar biosynthesis; CMP-3-deoxy-D-manno-octulosonate biosynthesis; CMP-3-deoxy-D-manno-octulosonate from 3-deoxy-D-manno-octulosonate and CTP: step 1/1. Its pathway is bacterial outer membrane biogenesis; lipopolysaccharide biosynthesis. In terms of biological role, activates KDO (a required 8-carbon sugar) for incorporation into bacterial lipopolysaccharide in Gram-negative bacteria. In Shigella dysenteriae serotype 1 (strain Sd197), this protein is 3-deoxy-manno-octulosonate cytidylyltransferase.